An 82-amino-acid polypeptide reads, in one-letter code: Small ribosomal subunit protein bS16 (82 aa).

This sequence belongs to the bacterial ribosomal protein bS16 family.

This chain is Small ribosomal subunit protein bS16, found in Caldanaerobacter subterraneus subsp. tengcongensis (strain DSM 15242 / JCM 11007 / NBRC 100824 / MB4) (Thermoanaerobacter tengcongensis).